A 388-amino-acid chain; its full sequence is (S)-8-oxocitronellyl enol synthase ISY1 (388 aa).

NADP(+)-binding positions include 35-37, 63-64, 81-82, 105-106, and Gln-143; these read TGI, RR, DV, and TW. Catalysis depends on residues Lys-147 and Tyr-178. Residues Tyr-178, Ile-205, and 212–214 each bind NADP(+); that span reads SMM.

The protein belongs to the short-chain dehydrogenases/reductases (SDR) family.

The enzyme catalyses (S)-8-oxocitronellyl enol + NADP(+) = (6E)-8-oxogeranial + NADPH + H(+). It carries out the reaction (S)-8-oxocitronellyl enol + NAD(+) = (6E)-8-oxogeranial + NADH + H(+). Its function is as follows. Iridoid synthase that catalyzes the first step in generation of the iridoid ring scaffold using the linear monoterpene (6E)-8-oxogeranial as substrate. Iridoids comprise a large family of distinctive bicyclic monoterpenes that possess a wide range of pharmacological activities, including anticancer, anti-inflammatory, antifungal and antibacterial activities. Catalyzes the conversion of the linear monoterpene (6E)-8-oxogeranial to (S)-8-oxocitronellyl enol, a precursor of nepetalactones, which are metabolites that are both insect-repellent and have euphoric effect in cats. The chain is (S)-8-oxocitronellyl enol synthase ISY1 from Nepeta racemosa (Catmint).